We begin with the raw amino-acid sequence, 442 residues long: Cytochrome c biogenesis protein CcsB (442 aa).

3 helical membrane passes run 17 to 37 (LRLAILLLLVIAIASMAGTVI), 76 to 96 (TPWYLTLLVLFGASLTACTLT), and 162 to 182 (LGPIVVHASMLLILLGGILGA).

Belongs to the Ccs1/CcsB family. As to quaternary structure, may interact with CcsA.

Its subcellular location is the cellular thylakoid membrane. Functionally, required during biogenesis of c-type cytochromes (cytochrome c6 and cytochrome f) at the step of heme attachment. The polypeptide is Cytochrome c biogenesis protein CcsB (Thermosynechococcus vestitus (strain NIES-2133 / IAM M-273 / BP-1)).